The primary structure comprises 304 residues: Sulfate adenylyltransferase subunit 2 (304 aa).

Belongs to the PAPS reductase family. CysD subfamily. Heterodimer composed of CysD, the smaller subunit, and CysNC.

It catalyses the reaction sulfate + ATP + H(+) = adenosine 5'-phosphosulfate + diphosphate. The protein operates within sulfur metabolism; hydrogen sulfide biosynthesis; sulfite from sulfate: step 1/3. Its function is as follows. With CysN forms the ATP sulfurylase (ATPS) that catalyzes the adenylation of sulfate producing adenosine 5'-phosphosulfate (APS) and diphosphate, the first enzymatic step in sulfur assimilation pathway. APS synthesis involves the formation of a high-energy phosphoric-sulfuric acid anhydride bond driven by GTP hydrolysis by CysN coupled to ATP hydrolysis by CysD. This is Sulfate adenylyltransferase subunit 2 from Xylella fastidiosa (strain Temecula1 / ATCC 700964).